The sequence spans 298 residues: Acetylglutamate kinase (298 aa).

Residues 69 to 70 (GG), arginine 91, and asparagine 196 contribute to the substrate site.

The protein belongs to the acetylglutamate kinase family. ArgB subfamily.

The protein resides in the cytoplasm. The catalysed reaction is N-acetyl-L-glutamate + ATP = N-acetyl-L-glutamyl 5-phosphate + ADP. It functions in the pathway amino-acid biosynthesis; L-arginine biosynthesis; N(2)-acetyl-L-ornithine from L-glutamate: step 2/4. Catalyzes the ATP-dependent phosphorylation of N-acetyl-L-glutamate. In Rhodopseudomonas palustris (strain BisB5), this protein is Acetylglutamate kinase.